The primary structure comprises 137 residues: Large ribosomal subunit protein uL16 (137 aa).

This sequence belongs to the universal ribosomal protein uL16 family. As to quaternary structure, part of the 50S ribosomal subunit.

Functionally, binds 23S rRNA and is also seen to make contacts with the A and possibly P site tRNAs. In Oleidesulfovibrio alaskensis (strain ATCC BAA-1058 / DSM 17464 / G20) (Desulfovibrio alaskensis), this protein is Large ribosomal subunit protein uL16.